Consider the following 860-residue polypeptide: Receptor-like protein 31 (860 aa).

The N-terminal stretch at 1 to 23 (MMIPSQSCFCFFFMVSFFLHTLA) is a signal peptide. Residues 24-809 (SPTLRHCRHD…SEPEEHVINW (786 aa)) are Extracellular-facing. N49, N64, N88, N95, N112, N117, N154, N178, N202, and N213 each carry an N-linked (GlcNAc...) asparagine glycan. LRR repeat units lie at residues 108-131 (QHLH…LGNL), 132-155 (FRLT…IGNL), 156-179 (SRLT…IGNL), 181-202 (QLEY…TFSN), 203-226 (LTKL…DMSG), and 227-251 (FQNL…LFTI). The LRR 7; degenerate repeat unit spans residues 252 to 276 (PSLRWANLEGNMFKGPIEFRNMYSP). 14 LRR repeats span residues 277 to 301 (STRL…LSQY), 302 to 325 (LNLI…LFTI), 326 to 349 (PTLE…NMSS), 350 to 374 (SSSL…VSQY), 376 to 398 (NLEE…ISKL), 400 to 419 (KLEY…PSWL), 420 to 444 (WRLT…GLDE), 446 to 468 (QVQW…ICKL), 469 to 494 (RSLE…SFMV), 496 to 517 (LTDL…FVNA), 518 to 541 (TKLL…LIHC), 543 to 564 (AMQL…WLGS), 565 to 591 (LPSL…SIGF), and 592 to 615 (QSLR…YFSS). N-linked (GlcNAc...) asparagine glycosylation is found at N313, N346, and N364. N429 carries an N-linked (GlcNAc...) asparagine glycan. 3 N-linked (GlcNAc...) asparagine glycosylation sites follow: N482, N503, and N516. N642, N673, and N697 each carry an N-linked (GlcNAc...) asparagine glycan. LRR repeat units follow at residues 665 to 690 (INEE…IGLL), 691 to 714 (KELR…LANL), 716 to 738 (KLEA…LGSL), and 740 to 763 (FMST…QFQG). 2 N-linked (GlcNAc...) asparagine glycosylation sites follow: N745 and N765. Residues 810–830 (IAAGIAYGPGVVCGLVIGHIF) traverse the membrane as a helical segment. The Cytoplasmic portion of the chain corresponds to 831 to 860 (LSHKHECWFMEKFRRKKPKVVTRIARPSKH).

Belongs to the RLP family.

It localises to the cell membrane. This is Receptor-like protein 31 from Arabidopsis thaliana (Mouse-ear cress).